A 347-amino-acid chain; its full sequence is uncharacterized protein (347 aa).

Zn(2+) is bound by residues Cys39, His65, Cys95, Cys98, Cys101, Cys109, and Glu152.

Belongs to the zinc-containing alcohol dehydrogenase family. The cofactor is Zn(2+).

This is an uncharacterized protein from Escherichia coli (strain K12).